Consider the following 390-residue polypeptide: NADH-quinone oxidoreductase subunit D (390 aa).

The protein belongs to the complex I 49 kDa subunit family. In terms of assembly, NDH-1 is composed of 14 different subunits. Subunits NuoB, C, D, E, F, and G constitute the peripheral sector of the complex.

It is found in the cell membrane. It catalyses the reaction a quinone + NADH + 5 H(+)(in) = a quinol + NAD(+) + 4 H(+)(out). In terms of biological role, NDH-1 shuttles electrons from NADH, via FMN and iron-sulfur (Fe-S) centers, to quinones in the respiratory chain. The immediate electron acceptor for the enzyme in this species is believed to be ubiquinone. Couples the redox reaction to proton translocation (for every two electrons transferred, four hydrogen ions are translocated across the cytoplasmic membrane), and thus conserves the redox energy in a proton gradient. This chain is NADH-quinone oxidoreductase subunit D, found in Wolbachia pipientis subsp. Culex pipiens (strain wPip).